Consider the following 452-residue polypeptide: Transcription factor AP-2-delta (452 aa).

Position 239 is a phosphoserine; by PKA (S239). Positions 280 to 410 are H-S-H (helix-span-helix), dimerization; that stretch reads RRKAANVTLL…VLSEMLNYLE (131 aa). A disordered region spans residues 416–452; it reads KNGGAADSGQGHANSEKAPLRKTSEAAVKEGKTEKTD. Basic and acidic residues predominate over residues 429–452; that stretch reads NSEKAPLRKTSEAAVKEGKTEKTD.

Belongs to the AP-2 family. As to quaternary structure, binds DNA as a dimer. Can form homodimers or heterodimers with other AP-2 family members. As to expression, highly expressed in brain, placenta, skeletal muscle, thymus, small intestine, and prostate, and expressed at lower levels in leukocyte, spleen, testis, ovary and colon. Barely detectable in heart, kidney, liver, lung or pancreas.

The protein resides in the nucleus. In terms of biological role, sequence-specific DNA-binding protein that interacts with inducible viral and cellular enhancer elements to regulate transcription of selected genes. AP-2 factors bind to the consensus sequence 5'-GCCNNNGGC-3' and activate genes involved in a large spectrum of important biological functions including proper eye, face, body wall, limb and neural tube development. They also suppress a number of genes including MCAM/MUC18, C/EBP alpha and MYC. The polypeptide is Transcription factor AP-2-delta (Homo sapiens (Human)).